Consider the following 501-residue polypeptide: Beta-secretase 1 (501 aa).

The N-terminal stretch at 1 to 21 (MAPALHWLLLWVGSGMLPAQG) is a signal peptide. The propeptide occupies 22–45 (THLGIRLPLRSGLAGPPLGLRLPR). The Extracellular portion of the chain corresponds to 22–457 (THLGIRLPLR…PQTDESTLMT (436 aa)). A disordered region spans residues 39–58 (LGLRLPRETDEESEEPGRRG). One can recognise a Peptidase A1 domain in the interval 75–416 (YYVEMTVGSP…DRARKRIGFA (342 aa)). The active site involves Asp-93. Residue Lys-126 is modified to N6-acetyllysine. N-linked (GlcNAc...) asparagine glycans are attached at residues Asn-153, Asn-172, and Asn-223. 3 cysteine pairs are disulfide-bonded: Cys-216–Cys-420, Cys-278–Cys-443, and Cys-330–Cys-380. Residues Lys-275, Lys-279, and Lys-285 each carry the N6-acetyllysine modification. Asp-289 is an active-site residue. N6-acetyllysine occurs at positions 299, 300, and 307. N-linked (GlcNAc...) asparagine glycosylation occurs at Asn-354. The chain crosses the membrane as a helical span at residues 458 to 478 (IAYVMAAICALFMLPLCLMVC). S-palmitoyl cysteine attachment occurs at residues Cys-474, Cys-478, Cys-482, and Cys-485. Residues 479–501 (QWRCLRCLRHQHDDFADDISLLK) are Cytoplasmic-facing. Residues 479–501 (QWRCLRCLRHQHDDFADDISLLK) are interaction with RTN3. A DXXLL motif is present at residues 496-500 (DISLL). A Phosphoserine modification is found at Ser-498. A Glycyl lysine isopeptide (Lys-Gly) (interchain with G-Cter in ubiquitin) cross-link involves residue Lys-501.

The protein belongs to the peptidase A1 family. In terms of assembly, monomer. Interacts (via DXXLL motif) with GGA1, GGA2 and GGA3 (via their VHS domain); the interaction highly increases when BACE1 is phosphorylated at Ser-498. Interacts with RTN1; RTN2; RTN3 and RTN4; the interaction leads to inhibition of amyloid precursor protein processing. Interacts with SNX6. Interacts with PCSK9. Interacts with NAT8 and NAT8B. Interacts with BIN1. Interacts (via extracellular domain) with ADAM10 (via extracellular domain). Interacts with SORL1; this interaction may affect binding with APP and hence reduce APP cleavage. Interacts with NRDC AND NRG1. N-Glycosylated. Addition of a bisecting N-acetylglucosamine by MGAT3 blocks lysosomal targeting, further degradation and is required for maintaining stability under stress conditions. In terms of processing, palmitoylation mediates lipid raft localization. Post-translationally, acetylated in the endoplasmic reticulum at Lys-126, Lys-275, Lys-279, Lys-285, Lys-299, Lys-300 and Lys-307. Acetylation by NAT8 and NAT8B is transient and deacetylation probably occurs in the Golgi. Acetylation regulates the maturation, the transport to the plasma membrane, the stability and the expression of the protein. Ubiquitinated at Lys-501, ubiquitination leads to lysosomal degradation. Monoubiquitinated and 'Lys-63'-linked polyubitinated. Deubiquitnated by USP8; inhibits lysosomal degradation. In terms of processing, phosphorylation at Ser-498 is required for interaction with GGA1 and retrograded transport from endosomal compartments to the trans-Golgi network. Non-phosphorylated BACE1 enters a direct recycling route to the cell surface. Expressed in the brain, specifically in neurons and astrocytes (at protein level).

The protein resides in the cell membrane. It localises to the golgi apparatus. The protein localises to the trans-Golgi network. Its subcellular location is the endoplasmic reticulum. It is found in the endosome. The protein resides in the late endosome. It localises to the early endosome. The protein localises to the cell surface. Its subcellular location is the cytoplasmic vesicle membrane. It is found in the membrane raft. The protein resides in the lysosome. It localises to the recycling endosome. The protein localises to the cell projection. Its subcellular location is the axon. It is found in the dendrite. It carries out the reaction Broad endopeptidase specificity. Cleaves Glu-Val-Asn-Leu-|-Asp-Ala-Glu-Phe in the Swedish variant of Alzheimer's amyloid precursor protein.. Its activity is regulated as follows. Inhibited by RTN3 and RTN4. Functionally, responsible for the proteolytic processing of the amyloid precursor protein (APP). Cleaves at the N-terminus of the A-beta peptide sequence, between residues 671 and 672 of APP, leads to the generation and extracellular release of beta-cleaved soluble APP, and a corresponding cell-associated C-terminal fragment which is later released by gamma-secretase. Cleaves CHL1. The polypeptide is Beta-secretase 1 (Mus musculus (Mouse)).